The sequence spans 664 residues: Transketolase 1 (664 aa).

Position 26 (His26) interacts with substrate. Thiamine diphosphate-binding positions include His66 and 114 to 116; that span reads GPL. A Mg(2+)-binding site is contributed by Asp155. 2 residues coordinate thiamine diphosphate: Gly156 and Asn185. Residues Asn185 and Ile187 each contribute to the Mg(2+) site. 3 residues coordinate substrate: His260, Arg357, and Ser384. Position 260 (His260) interacts with thiamine diphosphate. The active-site Proton donor is the Glu411. Phe437 contacts thiamine diphosphate. Substrate is bound by residues His461, Asp469, and Arg520.

This sequence belongs to the transketolase family. As to quaternary structure, homodimer. It depends on Mg(2+) as a cofactor. Requires Ca(2+) as cofactor. Mn(2+) serves as cofactor. The cofactor is Co(2+). Thiamine diphosphate is required as a cofactor.

It catalyses the reaction D-sedoheptulose 7-phosphate + D-glyceraldehyde 3-phosphate = aldehydo-D-ribose 5-phosphate + D-xylulose 5-phosphate. Functionally, catalyzes the transfer of a two-carbon ketol group from a ketose donor to an aldose acceptor, via a covalent intermediate with the cofactor thiamine pyrophosphate. The protein is Transketolase 1 (tkt1) of Vibrio vulnificus (strain YJ016).